Consider the following 115-residue polypeptide: MQFVLSWVFLVAILKGVQCEVQLVESRGVLVQPGGSLRLSCAASGFTVSSNEMSWVRQAPGKGLEWVSSISGGSTYYADSRKGRFTISRDNSKNTLHLQMNSLRAEDTAVYYCKK.

The first 19 residues, 1 to 19 (MQFVLSWVFLVAILKGVQC), serve as a signal peptide directing secretion. Residues 20–44 (EVQLVESRGVLVQPGGSLRLSCAAS) are framework-1. The Ig-like domain occupies 31–115 (VQPGGSLRLS…EDTAVYYCKK (85 aa)). Cys41 and Cys113 form a disulfide bridge. The segment at 45–52 (GFTVSSNE) is complementarity-determining-1. Residues 53–69 (MSWVRQAPGKGLEWVSS) form a framework-2 region. Positions 70 to 75 (ISGGST) are complementarity-determining-2. The framework-3 stretch occupies residues 76–113 (YYADSRKGRFTISRDNSKNTLHLQMNSLRAEDTAVYYC). The interval 114-115 (KK) is complementarity-determining-3.

As to quaternary structure, immunoglobulins are composed of two identical heavy chains and two identical light chains; disulfide-linked.

It is found in the secreted. It localises to the cell membrane. Functionally, probable non-functional open reading frame (ORF) of V region of the variable domain of immunoglobulin heavy chains. Non-functional ORF generally cannot participate in the synthesis of a productive immunoglobulin chain due to altered V-(D)-J or switch recombination and/or splicing site (at mRNA level) and/or conserved amino acid change (protein level). Immunoglobulins, also known as antibodies, are membrane-bound or secreted glycoproteins produced by B lymphocytes. In the recognition phase of humoral immunity, the membrane-bound immunoglobulins serve as receptors which, upon binding of a specific antigen, trigger the clonal expansion and differentiation of B lymphocytes into immunoglobulins-secreting plasma cells. Secreted immunoglobulins mediate the effector phase of humoral immunity, which results in the elimination of bound antigens. The antigen binding site is formed by the variable domain of one heavy chain, together with that of its associated light chain. Thus, each immunoglobulin has two antigen binding sites with remarkable affinity for a particular antigen. The variable domains are assembled by a process called V-(D)-J rearrangement and can then be subjected to somatic hypermutations which, after exposure to antigen and selection, allow affinity maturation for a particular antigen. The chain is Probable non-functional immunoglobulin heavy variable 3-38-3 from Homo sapiens (Human).